Reading from the N-terminus, the 566-residue chain is Peroxisomal targeting signal receptor (566 aa).

Residue Cys5 forms a Glycyl cysteine thioester (Cys-Gly) (interchain with G-Cter in ubiquitin) linkage. The interval 6-28 is amphipathic helix 1 (AH1); it reads SVGSNPLAQLNKHAQQNPALRQV. A Glycyl lysine isopeptide (Lys-Gly) (interchain with G-Cter in ubiquitin) cross-link involves residue Lys17. An amphipathic helix 2 (AH2) region spans residues 53–71; that stretch reads RFQMDQFMNRSPGFSDGQL. The disordered stretch occupies residues 88–159; that stretch reads GLKKQDSGSS…IGRPMMHTGI (72 aa). Residues 94-142 are compositionally biased toward polar residues; the sequence is SGSSNMSAGDTAQHSRSWGNEFNSRSPQQGLASRVNNVERISNTNSMSS. Residues 111 to 115 carry the WxxxF/Y motif 1 motif; it reads WGNEF. The tract at residues 145–151 is amphipathic helix 3 (AH3); the sequence is PGMSRIG. The WxxxF/Y motif 2 motif lies at 187 to 191; the sequence is WNEQF. The segment at 225–241 is amphipathic helix 4 (AH4); the sequence is FQEVWDKLQAETADNNL. The WxxxF/Y motif 3 signature appears at 248–252; it reads WEKDY. 5 TPR repeats span residues 277–311, 312–345, 416–449, 451–483, and 485–517; these read NPNA…DPAH, VDAW…DPTN, PEVQ…NPND, LMWN…KPSF, and RARY…HEVE.

The protein belongs to the peroxisomal targeting signal receptor family. Interacts (via WxxxF/Y and LVxEF motifs) with PEX14; promoting translocation through the PEX13-PEX14 docking complex. In terms of processing, monoubiquitinated at Cys-5 by PEX2 during PEX5 passage through the retrotranslocation channel: monoubiquitination acts as a signal for PEX5 extraction and is required for proper export from peroxisomes and recycling. When PEX5 recycling is compromised, polyubiquitinated at Lys-17 by PEX10 during its passage through the retrotranslocation channel, leading to its degradation.

Its subcellular location is the cytoplasm. It localises to the cytosol. The protein localises to the peroxisome matrix. In terms of biological role, receptor that mediates peroxisomal import of proteins containing a C-terminal PTS1-type tripeptide peroxisomal targeting signal (SKL-type). Binds to cargo proteins containing a PTS1 peroxisomal targeting signal in the cytosol, and translocates them into the peroxisome matrix by passing through the PEX13-PEX14 docking complex along with cargo proteins. PEX5 receptor is then retrotranslocated into the cytosol, leading to release of bound cargo in the peroxisome matrix, and reset for a subsequent peroxisome import cycle. The sequence is that of Peroxisomal targeting signal receptor (PEX5) from Kluyveromyces lactis (strain ATCC 8585 / CBS 2359 / DSM 70799 / NBRC 1267 / NRRL Y-1140 / WM37) (Yeast).